A 222-amino-acid chain; its full sequence is N-(5'-phosphoribosyl)anthranilate isomerase (222 aa).

Belongs to the TrpF family.

It carries out the reaction N-(5-phospho-beta-D-ribosyl)anthranilate = 1-(2-carboxyphenylamino)-1-deoxy-D-ribulose 5-phosphate. The protein operates within amino-acid biosynthesis; L-tryptophan biosynthesis; L-tryptophan from chorismate: step 3/5. This is N-(5'-phosphoribosyl)anthranilate isomerase from Xanthomonas euvesicatoria pv. vesicatoria (strain 85-10) (Xanthomonas campestris pv. vesicatoria).